The chain runs to 143 residues: Probable cyclic pyranopterin monophosphate synthase (143 aa).

Substrate contacts are provided by residues 61 to 63 and 97 to 98; these read YCH and ME. The active site involves Asp112.

It belongs to the MoaC family. Homohexamer; trimer of dimers.

The catalysed reaction is (8S)-3',8-cyclo-7,8-dihydroguanosine 5'-triphosphate = cyclic pyranopterin phosphate + diphosphate. It participates in cofactor biosynthesis; molybdopterin biosynthesis. Its function is as follows. Catalyzes the conversion of (8S)-3',8-cyclo-7,8-dihydroguanosine 5'-triphosphate to cyclic pyranopterin monophosphate (cPMP). This chain is Probable cyclic pyranopterin monophosphate synthase, found in Thermoplasma acidophilum (strain ATCC 25905 / DSM 1728 / JCM 9062 / NBRC 15155 / AMRC-C165).